The sequence spans 407 residues: Peptidase T (407 aa).

His78 lines the Zn(2+) pocket. Residue Asp80 is part of the active site. Asp141 provides a ligand contact to Zn(2+). Glu175 acts as the Proton acceptor in catalysis. Residues Glu176, Asp198, and His380 each contribute to the Zn(2+) site.

Belongs to the peptidase M20B family. The cofactor is Zn(2+).

It is found in the cytoplasm. The catalysed reaction is Release of the N-terminal residue from a tripeptide.. Functionally, cleaves the N-terminal amino acid of tripeptides. This Clostridium novyi (strain NT) protein is Peptidase T.